Reading from the N-terminus, the 181-residue chain is Ribulose bisphosphate carboxylase small subunit, chloroplastic 1 (181 aa).

A chloroplast-targeting transit peptide spans 1–54 (MASSMLSSAAVVTSPAQATMVAPFTGLKSSSAFPVTRKANNDITSIVSNGGRVS).

Belongs to the RuBisCO small chain family. Heterohexadecamer of 8 large and 8 small subunits.

The protein localises to the plastid. Its subcellular location is the chloroplast. Its function is as follows. RuBisCO catalyzes two reactions: the carboxylation of D-ribulose 1,5-bisphosphate, the primary event in carbon dioxide fixation, as well as the oxidative fragmentation of the pentose substrate. Both reactions occur simultaneously and in competition at the same active site. Although the small subunit is not catalytic it is essential for maximal activity. In Brassica napus (Rape), this protein is Ribulose bisphosphate carboxylase small subunit, chloroplastic 1.